The chain runs to 151 residues: Large-conductance mechanosensitive channel (151 aa).

The next 2 membrane-spanning stretches (helical) occupy residues Gly12–Thr32 and Val71–Val91. The disordered stretch occupies residues Ala122–Gln151.

It belongs to the MscL family. In terms of assembly, homopentamer.

The protein localises to the cell membrane. Channel that opens in response to stretch forces in the membrane lipid bilayer. May participate in the regulation of osmotic pressure changes within the cell. This is Large-conductance mechanosensitive channel from Mycobacterium tuberculosis (strain CDC 1551 / Oshkosh).